Consider the following 173-residue polypeptide: Putative phosphoesterase GWCH70_0799 (173 aa).

H34 acts as the Proton donor in catalysis. 2 consecutive short sequence motifs (HXTX) follow at residues 34-37 (HLTL) and 115-118 (HITI). H115 (proton acceptor) is an active-site residue.

The protein belongs to the 2H phosphoesterase superfamily. YjcG family.

The chain is Putative phosphoesterase GWCH70_0799 from Geobacillus sp. (strain WCH70).